The primary structure comprises 548 residues: Non-structural protein NS1 (548 aa).

It belongs to the orbivirus non-structural protein NS1 family.

This chain is Non-structural protein NS1 (Segment-5), found in Camelus dromedarius (Dromedary).